The chain runs to 1097 residues: Kinesin-like protein KIF1C (1097 aa).

Residues 5–347 form the Kinesin motor domain; it reads SVKVAVRVRP…LRYADRTKQI (343 aa). An ATP-binding site is contributed by 96–103; the sequence is GQTGAGKS. Serine 294 carries the post-translational modification Phosphoserine. A coiled-coil region spans residues 358–380; the sequence is NARLIRELQEEVARLRELLMAQG. Residues 397–434 form a disordered region; it reads GGVLPAASSPPAPASPSSPPPHNGELEPSFSPSAEPQI. A compositionally biased stretch (pro residues) spans 404–418; sequence SSPPAPASPSSPPPH. Residues 437–478 adopt a coiled-coil conformation; it reads EEAMERLQETEKIIAELNETWEEKLRKTEALRMEREALLAEM. Phosphoserine is present on serine 491. In terms of domain architecture, FHA spans 520–587; it reads TRVGQVDVDI…LKSGNRIVMG (68 aa). The stretch at 630–671 forms a coiled coil; the sequence is EQQGIDIKLEMEKRLQDLENQYRKEKEEADLLLEQQRLYADS. Phosphoserine occurs at positions 671 and 673. Residues 824–868 adopt a coiled-coil conformation; that stretch reads AEVEDLRAHIDKLTGILQEVKLQNSSKDRELQALRDRMLRMERVI. 2 disordered regions span residues 897-921 and 946-1097; these read EAVS…ERVS and QGLQ…GAAV. Serine 911 carries the post-translational modification Phosphoserine. Over residues 949 to 958 the composition is skewed to gly residues; the sequence is QGSGGRGGGL. Residues 997-1015 are compositionally biased toward pro residues; it reads GPQPPEEVTAPPPPPNRRP. Positions 1016–1026 are enriched in basic residues; it reads PSPRRPHRPRR. Serine 1028 carries the post-translational modification Phosphoserine. An Omega-N-methylarginine modification is found at arginine 1036. Over residues 1059–1077 the composition is skewed to pro residues; it reads QPQPYPAQRPGPRYPPYTT. Threonine 1077 is subject to Phosphothreonine. Serine 1086 is subject to Phosphoserine. Over residues 1086-1097 the composition is skewed to basic and acidic residues; that stretch reads SAPDLKESGAAV.

It belongs to the TRAFAC class myosin-kinesin ATPase superfamily. Kinesin family. Unc-104 subfamily.

It is found in the cytoplasm. The protein resides in the cytoskeleton. In terms of biological role, probable motor protein. The chain is Kinesin-like protein KIF1C (Kif1c) from Rattus norvegicus (Rat).